Consider the following 190-residue polypeptide: Ganglioside GM2 activator (190 aa).

The N-terminal stretch at 1 to 23 is a signal peptide; it reads MQSLMQAPVLIALGLLFAAPAQA. 4 disulfide bridges follow: cysteine 36-cysteine 180, cysteine 96-cysteine 103, cysteine 109-cysteine 135, and cysteine 122-cysteine 133. Asparagine 60 is a glycosylation site (N-linked (GlcNAc...) asparagine).

Its subcellular location is the lysosome. The enzyme catalyses cholesterol(in) = cholesterol(out). Functionally, the large binding pocket can accommodate several single chain phospholipids and fatty acids, GM2A also exhibits some calcium-independent phospholipase activity. Binds gangliosides and stimulates ganglioside GM2 degradation. It stimulates only the breakdown of ganglioside GM2 and glycolipid GA2 by beta-hexosaminidase A. It extracts single GM2 molecules from membranes and presents them in soluble form to beta-hexosaminidase A for cleavage of N-acetyl-D-galactosamine and conversion to GM3. Has cholesterol transfer activity. In Macaca fascicularis (Crab-eating macaque), this protein is Ganglioside GM2 activator (GM2A).